Here is a 645-residue protein sequence, read N- to C-terminus: E3 ubiquitin-protein ligase ORTHRUS 2 (645 aa).

The PHD-type zinc finger occupies 12–63 (DGVCMRCKSNPPPEESLTCGTCVTPWHVSCLSSPPKTLASTLQWHCPDCSGE). The segment at 96–133 (LSTEEKAKMRQRLLSGKGVEEDDEEEKRKKKGKGKNPN) is disordered. Residues 146–185 (CSFCMQLPERPVTKPCGHNACLKCFEKWMGQGKRTCGKCR) form an RING-type 1 zinc finger. Positions 273–422 (VRNQGLLVGE…FKVCRYLFVR (150 aa)) constitute a YDG domain. An RING-type 2 zinc finger spans residues 518–575 (CQICQQVLTLPVTTPCAHNFCKACLEAKFAGKTLVRERSTGGRTLRSRKNVLNCPCCP). Residues 583–613 (QNPQVNREVAEVIEKLKTQEEDTAELEDEDE) adopt a coiled-coil conformation. Positions 599–645 (KTQEEDTAELEDEDEGECSGTTPEEDSEQPKKRIKLDTDATVSATIR) are disordered. Residues 603–625 (EDTAELEDEDEGECSGTTPEEDS) are compositionally biased toward acidic residues. Positions 626 to 636 (EQPKKRIKLDT) are enriched in basic and acidic residues.

As to quaternary structure, interacts with histones CENH3, HTB2, HTR3 and H4. As to expression, mostly expressed in inflorescence and, to a lower extent, in leaves.

The protein localises to the nucleus. The enzyme catalyses S-ubiquitinyl-[E2 ubiquitin-conjugating enzyme]-L-cysteine + [acceptor protein]-L-lysine = [E2 ubiquitin-conjugating enzyme]-L-cysteine + N(6)-ubiquitinyl-[acceptor protein]-L-lysine.. It functions in the pathway protein modification; protein ubiquitination. E3 ubiquitin-protein ligase. Participates in CpG methylation-dependent transcriptional regulation and epigenetic transcriptional silencing. Mediates ubiquitination with the E2 ubiquitin-conjugating enzyme UBC11. Promotes methylation-mediated gene silencing leading, for example, to early flowering. Associates with methylated DNA, and can bind to CpG, CpNpG, and CpNpN DNA motifs, with a strong preference for methylated forms, and with highest affinity for CpG substrate. Probably acts at the DNA methylation?histone interface to maintain centromeric heterochromatin. The chain is E3 ubiquitin-protein ligase ORTHRUS 2 (ORTH2) from Arabidopsis thaliana (Mouse-ear cress).